We begin with the raw amino-acid sequence, 484 residues long: Cysteine--tRNA ligase (484 aa).

Cys29 contributes to the Zn(2+) binding site. The short motif at 31-41 is the 'HIGH' region element; it reads PTVQSAPHIGH. 3 residues coordinate Zn(2+): Cys219, His244, and Glu248. A 'KMSKS' region motif is present at residues 275-279; that stretch reads KMSKS. Lys278 contributes to the ATP binding site.

The protein belongs to the class-I aminoacyl-tRNA synthetase family. Monomer. The cofactor is Zn(2+).

Its subcellular location is the cytoplasm. The enzyme catalyses tRNA(Cys) + L-cysteine + ATP = L-cysteinyl-tRNA(Cys) + AMP + diphosphate. This chain is Cysteine--tRNA ligase, found in Clavibacter michiganensis subsp. michiganensis (strain NCPPB 382).